Reading from the N-terminus, the 532-residue chain is MEVGMVVVVAAKVLVSLWCVGACCLAAYLYRVVWVAPRRVLAEFRRQGIGGPRPSFPYGNLADMREAVAAARHQLAEARRRRRARDSGDGGSGAGIVHDYRPAVLPFYEKWRKDYGPIFTYSMGNVVFLHVSRPDVVRDINLCVSLDLGKSSYLKATHEPLFGGGILKSNGEAWAHQRKIIAREFFLDKVKGMVDLMVDSAQTLLKSWEEGIDKNGGTIDIKIDDDIRAYSADVISRTCFGSSYIKGKNIFLKIRELQKAVSKPNVLAEMTGLRFFPIKRNKQAWELHKQVHKLILEIVKESGEERNLLRAILLSASSSKVELAEAENFIVDNCKSIYFAGYESTAVTAAWCLMLLGLHPEWQDRVREEVQEVCAGQPVDSQSLQKMKNLTMVIQETLRLYPAGAFVSRQALQELKFGGVHIPKGVNIYIPVSTMHLDPNLWGPDVKEFNPERFSNAQPQLHSYLPFGAGARTCLGQGFAMAELKTLISLIISKFVLKLSPNYEHSPTLKLIVEPEFGVDLSLTRVQGAYRH.

Residues 1–2 (ME) are Lumenal-facing. A helical; Signal-anchor for type III membrane protein membrane pass occupies residues 3-23 (VGMVVVVAAKVLVSLWCVGAC). Topologically, residues 24-532 (CLAAYLYRVV…LTRVQGAYRH (509 aa)) are cytoplasmic. Cysteine 474 contacts heme.

This sequence belongs to the cytochrome P450 family. The cofactor is heme. As to expression, highly expressed in shoot, spikelet and uppermost internode. Detected in roots, leaves and anthers.

It is found in the membrane. Functionally, catalyzes the 13-hydroxylation of gibberellins (GAs). Determines the ratio of GA4 and GA1. Converts GA12 into GA53. This Oryza sativa subsp. japonica (Rice) protein is Cytochrome P450 714B2 (CYP714B2).